Consider the following 246-residue polypeptide: UPF0246 protein stu1967 (246 aa).

This sequence belongs to the UPF0246 family.

The chain is UPF0246 protein stu1967 from Streptococcus thermophilus (strain ATCC BAA-250 / LMG 18311).